The sequence spans 359 residues: Transaldolase (359 aa).

Lys-139 functions as the Schiff-base intermediate with substrate in the catalytic mechanism.

The protein belongs to the transaldolase family. Type 2 subfamily.

Its subcellular location is the cytoplasm. The enzyme catalyses D-sedoheptulose 7-phosphate + D-glyceraldehyde 3-phosphate = D-erythrose 4-phosphate + beta-D-fructose 6-phosphate. The protein operates within carbohydrate degradation; pentose phosphate pathway; D-glyceraldehyde 3-phosphate and beta-D-fructose 6-phosphate from D-ribose 5-phosphate and D-xylulose 5-phosphate (non-oxidative stage): step 2/3. Transaldolase is important for the balance of metabolites in the pentose-phosphate pathway. This chain is Transaldolase, found in Thiobacillus denitrificans (strain ATCC 25259 / T1).